Consider the following 500-residue polypeptide: MAFLLTTRRLVCSSQKNLHLFTPGSRYISQAAAKVDFEFDYDGPLMKTEVPGPRSQELMKQLNTIQNAEAVHFFCNYEESRGNYLVDVDGNRMLDLYSQISSVPIGYNHPALAKLVQQPQNASTFINRPALGILPPENFVDKLRESLMSVAPKGMCQLITMACGSCSNENAFKTIFMWYRSKERGQRGFSKEELETCMVNQSPGCPDYSILSFMGAFHGRTMGCLATTHSKAIHKIDIPSFDWPIAPFPRLKYPLEEFVTDNQQEEARCLEEVEDLIVKYRKKKRTVAGIIVEPIQSEGGDNHASDDFFRKLRDIARKHGCAFLVDEVQTGGGCTGKFWAHEHWGLDDPADVMSFSKKMMTGGFFHKEEFRPSAPYRIFNTWLGDPSKNLLLAEVINIIKREDLLNNVAHAGKTLLTGLLDLQAQYPQFVSRVRGRGTFCSFDTPDEAIRNKLILIARNKGVVLGGCGDKSIRFRPTLVFRDHHAHLFLNIFSGILADFK.

The N-terminal 27 residues, 1-27 (MAFLLTTRRLVCSSQKNLHLFTPGSRY), are a transit peptide targeting the mitochondrion. Cys-163 is a [2Fe-2S] cluster binding site. 164 to 165 (GS) is a binding site for pyridoxal 5'-phosphate. A [2Fe-2S] cluster-binding site is contributed by Cys-166. A substrate-binding site is contributed by Arg-220. N6-succinyllysine is present on Lys-231. An N6-acetyllysine; alternate modification is found at Lys-252. Lys-252 bears the N6-succinyllysine; alternate mark. 2 positions are modified to N6-acetyllysine: Lys-279 and Lys-318. Lys-357 bears the N6-(pyridoxal phosphate)lysine mark. Thr-381 provides a ligand contact to pyridoxal 5'-phosphate. Residue Lys-413 is modified to N6-acetyllysine; alternate. N6-succinyllysine; alternate is present on Lys-413. 2 positions are modified to N6-acetyllysine: Lys-452 and Lys-470.

This sequence belongs to the class-III pyridoxal-phosphate-dependent aminotransferase family. Homodimer; disulfide-linked. The cofactor is pyridoxal 5'-phosphate. It depends on [2Fe-2S] cluster as a cofactor.

It localises to the mitochondrion matrix. It catalyses the reaction 4-aminobutanoate + 2-oxoglutarate = succinate semialdehyde + L-glutamate. It carries out the reaction (S)-3-amino-2-methylpropanoate + 2-oxoglutarate = 2-methyl-3-oxopropanoate + L-glutamate. Functionally, catalyzes the conversion of gamma-aminobutyrate and L-beta-aminoisobutyrate to succinate semialdehyde and methylmalonate semialdehyde, respectively. Can also convert delta-aminovalerate and beta-alanine. The sequence is that of 4-aminobutyrate aminotransferase, mitochondrial from Rattus norvegicus (Rat).